Here is a 301-residue protein sequence, read N- to C-terminus: Putative ribosomal RNA methyltransferase PB17E12.10c (301 aa).

Positions 87, 89, 107, and 186 each coordinate S-adenosyl-L-methionine. Catalysis depends on K247, which acts as the Proton acceptor.

The protein belongs to the class I-like SAM-binding methyltransferase superfamily. RNA methyltransferase RlmE family.

The catalysed reaction is a uridine in rRNA + S-adenosyl-L-methionine = a 2'-O-methyluridine in rRNA + S-adenosyl-L-homocysteine + H(+). The polypeptide is Putative ribosomal RNA methyltransferase PB17E12.10c (Schizosaccharomyces pombe (strain 972 / ATCC 24843) (Fission yeast)).